The chain runs to 530 residues: Calcium uptake protein 3, mitochondrial (530 aa).

The N-terminal 43 residues, 1-43 (MAALRRLLWPPPRVSPPLCAHQPLLGPWGRPAVTTLGLPGRPF), are a transit peptide targeting the mitochondrion. Residues 92–115 (GSPATGRPSKSAATEPEDPPRGRG) form a disordered region. The EF-hand 1 domain occupies 232-267 (KPHAGFRIAFNMFDTDGNEMVDKKEFLVLQEIFRKK). Ca(2+)-binding residues include aspartate 245, aspartate 247, asparagine 249, methionine 251, aspartate 253, and glutamate 256. The region spanning 401–436 (VENTSVFLENVRYSIPEEKGITFDEFRSFFQFLNNL) is the EF-hand 2; degenerate domain. An EF-hand 3 domain is found at 470–505 (FSPHLVNTVFKIFDVDKDDQLSYKEFIGIMKDRLHR). 5 residues coordinate Ca(2+): aspartate 483, aspartate 485, aspartate 487, glutamine 489, and glutamate 494.

Belongs to the MICU1 family. MICU3 subfamily. As to quaternary structure, heterodimer; disulfide-linked; heterodimerizes with MICU1. Component of the uniplex complex, composed of MCU, EMRE/SMDT1, MICU1 and MICU3 in a 4:4:1:1 stoichiometry. As to expression, specifically expressed in the central nervous system and skeletal muscle.

It localises to the mitochondrion intermembrane space. The protein resides in the mitochondrion inner membrane. Its function is as follows. Tissue-specific calcium sensor of the mitochondrial calcium uniporter (MCU) channel, which specifically regulates MCU channel activity in the central nervous system and skeletal muscle. Senses calcium level via its EF-hand domains: compared to MICU1 and MICU2, MICU3 has a higher affinity for calcium. MICU1 and MICU3 form a disulfide-linked heterodimer that stimulates and inhibits MCU activity, depending on the concentration of calcium. At low calcium levels, MICU1 occludes the pore of the MCU channel, preventing mitochondrial calcium uptake. At higher calcium levels, calcium-binding to MICU1 and MICU3 induces a conformational change that weakens MCU-MICU1 interactions and moves the MICU1-MICU3 heterodimer away from the pore, allowing calcium permeation through the MCU channel. The high calcium affinity of MICU3 lowers the calcium threshold necessary for calcium permeation through the MCU channel. The MICU1-MICU3 heterodimer promotes flexibility of neurotransmission in neuronal cells by enhancing mitochondrial calcium uptake in presynapses. It is also required to increase mitochondrial calcium uptake in skeletal muscle cells, thereby increasing ATP production. The sequence is that of Calcium uptake protein 3, mitochondrial from Homo sapiens (Human).